A 100-amino-acid chain; its full sequence is Small ribosomal subunit protein uS14c (100 aa).

This sequence belongs to the universal ribosomal protein uS14 family. As to quaternary structure, part of the 30S ribosomal subunit.

It is found in the plastid. It localises to the chloroplast. Functionally, binds 16S rRNA, required for the assembly of 30S particles. This chain is Small ribosomal subunit protein uS14c, found in Tetradesmus obliquus (Green alga).